The sequence spans 886 residues: Alanine--tRNA ligase (886 aa).

The Zn(2+) site is built by H568, H572, C670, and H674.

It belongs to the class-II aminoacyl-tRNA synthetase family. Requires Zn(2+) as cofactor.

The protein localises to the cytoplasm. The enzyme catalyses tRNA(Ala) + L-alanine + ATP = L-alanyl-tRNA(Ala) + AMP + diphosphate. Its function is as follows. Catalyzes the attachment of alanine to tRNA(Ala) in a two-step reaction: alanine is first activated by ATP to form Ala-AMP and then transferred to the acceptor end of tRNA(Ala). Also edits incorrectly charged Ser-tRNA(Ala) and Gly-tRNA(Ala) via its editing domain. This Prochlorococcus marinus (strain NATL1A) protein is Alanine--tRNA ligase.